The following is a 361-amino-acid chain: Oxidoreductase lepF (361 aa).

The helical transmembrane segment at 257–277 (MLMLVLQAVLLPVFYVVAMPL) threads the bilayer.

It belongs to the NmrA-type oxidoreductase family.

The protein localises to the membrane. Functionally, oxidoreductase; part of the gene cluster 23 that mediates the biosynthesis of a family of 2-pyridones known as leporins. The hybrid PKS-NRPS synthetase lepA and the enoyl reductase lepG are responsible for fusion of phenylalanine with a hexaketide and subsequent release of the stable tetramic acid precursor, pre-leporin C. Because lepA lacks a designated enoylreductase (ER) domain, the required activity is provided the enoyl reductase lepG. It is possible that the dehydrogenase lepF also participates in production of pre-leporin C. Cytochrome P450 monooxygenase lepH is then required for the ring expansion step to yield leporin C. Leporin C is then presumably further oxidized by the N-hydroxylase lepD to form leporin B. LepI may possess a function in biosynthesis upstream of lepA. Leporin B is further oxidized in the presence of ferric ion to give the leporin B trimer-iron chelate, but whether or not this reaction is catalyzed by an enzyme in the pathway or by ferric ion is not determined yet. The chain is Oxidoreductase lepF from Aspergillus flavus (strain ATCC 200026 / FGSC A1120 / IAM 13836 / NRRL 3357 / JCM 12722 / SRRC 167).